Here is a 471-residue protein sequence, read N- to C-terminus: Putative multidrug resistance protein MdtD (471 aa).

Helical transmembrane passes span 12–32, 49–69, 72–92, 101–123, 138–158, 165–185, 195–215, 220–240, 265–285, 286–306, 342–362, 393–413, and 431–451; these read LWIV…VNTA, MVIV…GWMA, IGVR…SLFC, LVMS…RLTV, FVTL…GILV, WIFL…LWLM, FDIF…LALD, LGIS…SILW, IGLF…FMTP, VFLQ…MIPM, LVFM…VLFF, LLSM…GLLL, and VFLY…LIFA.

Belongs to the major facilitator superfamily. TCR/Tet family.

The protein localises to the cell inner membrane. This chain is Putative multidrug resistance protein MdtD, found in Enterobacter sp. (strain 638).